The sequence spans 326 residues: Lipoyl synthase (326 aa).

Residues Cys-74, Cys-79, Cys-85, Cys-100, Cys-104, Cys-107, and Ser-314 each coordinate [4Fe-4S] cluster. The 219-residue stretch at 85-303 folds into the Radical SAM core domain; it reads CFGRGTATFM…EEEAYKMGFS (219 aa).

This sequence belongs to the radical SAM superfamily. Lipoyl synthase family. The cofactor is [4Fe-4S] cluster.

It localises to the cytoplasm. The catalysed reaction is [[Fe-S] cluster scaffold protein carrying a second [4Fe-4S](2+) cluster] + N(6)-octanoyl-L-lysyl-[protein] + 2 oxidized [2Fe-2S]-[ferredoxin] + 2 S-adenosyl-L-methionine + 4 H(+) = [[Fe-S] cluster scaffold protein] + N(6)-[(R)-dihydrolipoyl]-L-lysyl-[protein] + 4 Fe(3+) + 2 hydrogen sulfide + 2 5'-deoxyadenosine + 2 L-methionine + 2 reduced [2Fe-2S]-[ferredoxin]. It participates in protein modification; protein lipoylation via endogenous pathway; protein N(6)-(lipoyl)lysine from octanoyl-[acyl-carrier-protein]: step 2/2. Its function is as follows. Catalyzes the radical-mediated insertion of two sulfur atoms into the C-6 and C-8 positions of the octanoyl moiety bound to the lipoyl domains of lipoate-dependent enzymes, thereby converting the octanoylated domains into lipoylated derivatives. The protein is Lipoyl synthase of Acidovorax ebreus (strain TPSY) (Diaphorobacter sp. (strain TPSY)).